The primary structure comprises 318 residues: MFLINVLTVTLPILPAVAFLTLVERKALGYMQLRKGPNVVGPYGLLQPIADAIKLFTKEPIYPQTSSKFLFTVAPILALTLALTVWAPLPMPYPLINLNLSLLFILAMSSLMVYSILWSGWASNSKYALMGALRAVAQTISYEVSMTTITLSMVLMNGSFTLTAFATTQEHLWLIFPMWPLMMMWFTSTLAETNRAPFDLTEGESELVSGFNVEYSAGPFALFFMAEYANIIMMNALTVILFMGTSCDPQMPEISTINFVMKTIILTICFLWVRASYPRFRYDQLMYLLWKNFLPLTLALCMWHISILISLACIPPQA.

8 helical membrane-spanning segments follow: residues 2-22 (FLIN…FLTL), 69-89 (FLFT…WAPL), 102-122 (LLFI…SGWA), 146-166 (MTTI…TAFA), 171-191 (HLWL…STLA), 222-242 (LFFM…VILF), 253-273 (EIST…FLWV), and 294-314 (LPLT…LACI).

It belongs to the complex I subunit 1 family. Core subunit of respiratory chain NADH dehydrogenase (Complex I) which is composed of 45 different subunits.

The protein resides in the mitochondrion inner membrane. The catalysed reaction is a ubiquinone + NADH + 5 H(+)(in) = a ubiquinol + NAD(+) + 4 H(+)(out). Its function is as follows. Core subunit of the mitochondrial membrane respiratory chain NADH dehydrogenase (Complex I) which catalyzes electron transfer from NADH through the respiratory chain, using ubiquinone as an electron acceptor. Essential for the catalytic activity and assembly of complex I. The sequence is that of NADH-ubiquinone oxidoreductase chain 1 (MT-ND1) from Elephas maximus (Indian elephant).